Consider the following 793-residue polypeptide: Short transient receptor potential channel 1 (793 aa).

Positions 1-30 (MMAALYPSTDLSGASSSSLPSSPSSSSPNE) are disordered. Residues 1–345 (MMAALYPSTD…FGQMSGYRRK (345 aa)) are Cytoplasmic-facing. The segment covering 15–28 (SSSSLPSSPSSSSP) has biased composition (low complexity). ANK repeat units lie at residues 46 to 75 (LNEKLFLLACDKGDYYMVKEILEENSSGDL), 83 to 109 (LGRNAVTITIENENLDILQLLLDYGCQ), 111 to 156 (ADAL…EYST), and 158 to 180 (MDVAPVILAAHRNNYEILTMLLK). Residues His189, Cys193, Cys195, and Cys198 each contribute to the Zn(2+) site. Positions 346-379 (PTCKKIMTVLTVGIFWPVLSLCYLIAPKSQFGRI) form an intramembrane region, discontinuously helical. The Cytoplasmic segment spans residues 380 to 386 (IHTPFMK). The helical transmembrane segment at 387–404 (FIIHGASYFTFLLLLNLY) threads the bilayer. At 405–422 (SLVYHEDKKNTMGPALER) the chain is on the extracellular side. A helical transmembrane segment spans residues 423-439 (IDYLLILWIIGMIWSDI). Topologically, residues 440–455 (KRLWYEGLEDFLEESR) are cytoplasmic. A helical transmembrane segment spans residues 456–475 (NQLSFVMNSLYLATFALKEE). Residues 476-496 (AHNKFHDFADRKDWDAFHPTL) lie on the Extracellular side of the membrane. A helical membrane pass occupies residues 497 to 517 (VAEGLFAFANVLSYLRLFFYV). Residues 518–536 (YTSSILGPLQISMGRMLQD) lie on the Cytoplasmic side of the membrane. A helical membrane pass occupies residues 537 to 558 (FGKFLGMFLLVLFSFTIGLTQL). Over 559-623 (YDKGYTPKEQ…GEELQSFVGA (65 aa)) the chain is Extracellular. Cys571 and Cys576 form a disulfide bridge. A helical transmembrane segment spans residues 624–644 (FIVGTYNVVVVIVLTKLLVAM). Over 645-793 (LHKSFQLIAN…SKYAMFYPRN (149 aa)) the chain is Cytoplasmic.

This sequence belongs to the transient receptor (TC 1.A.4) family. STrpC subfamily. TRPC1 sub-subfamily. As to quaternary structure, heterotetramer with TRPC4 and/or TRPC5. Forms a heteromeric ion channel with TRPC4, with a 1:3 TRPC1:TRPC4 stoichiometry. Unlike other TRP channel proteins, does not form a homomeric channel. Interacts with TRPC4AP. Interacts with ITPR3. Interacts with MX1 and RNF24. Interacts with FKBP4. Interacts with PLSCR1. Interacts with PKD2L2. Forms a heterotetramer with PKD2 with a 2:2 stoichiometry; has distinct channel properties separate from PKD2 or TRPC1 homomers alone. Activation of PRKCA induces phosphorylation of TRPC1 and subsequent Ca2+ entry into cells.

It is found in the cell membrane. It catalyses the reaction Ca(2+)(in) = Ca(2+)(out). The enzyme catalyses Na(+)(in) = Na(+)(out). The catalysed reaction is Li(+)(in) = Li(+)(out). It carries out the reaction Cs(+)(in) = Cs(+)(out). May be operated by a phosphatidylinositol second messenger system activated by receptor tyrosine kinases or G-protein coupled receptors. Also activated by intracellular calcium store depletion. Functionally, forms a receptor-activated non-selective calcium permeant cation channel. Forms a heteromeric ion channel with TRPC4 or TRPC5 that has reduced calcium permeability compared to the homomeric TRPC4 or TRPC5 channel. Also permeable to monovalent ions including sodium, lithium and cesium ions. The polypeptide is Short transient receptor potential channel 1 (TRPC1) (Bos taurus (Bovine)).